Here is a 125-residue protein sequence, read N- to C-terminus: Large ribosomal subunit protein bL12 (125 aa).

This sequence belongs to the bacterial ribosomal protein bL12 family. In terms of assembly, homodimer. Part of the ribosomal stalk of the 50S ribosomal subunit. Forms a multimeric L10(L12)X complex, where L10 forms an elongated spine to which 2 to 4 L12 dimers bind in a sequential fashion. Binds GTP-bound translation factors.

Its function is as follows. Forms part of the ribosomal stalk which helps the ribosome interact with GTP-bound translation factors. Is thus essential for accurate translation. The sequence is that of Large ribosomal subunit protein bL12 from Methylorubrum extorquens (strain CM4 / NCIMB 13688) (Methylobacterium extorquens).